We begin with the raw amino-acid sequence, 139 residues long: Succinate dehydrogenase assembly factor 2, mitochondrial (139 aa).

Residues 1-28 constitute a mitochondrion transit peptide; the sequence is MLRKTNLSNITTLLRSARCMNRMPQLRF.

This sequence belongs to the SDHAF2 family. Interacts with the flavoprotein subunit within the SDH catalytic dimer.

The protein resides in the mitochondrion. Its subcellular location is the mitochondrion matrix. Functionally, plays an essential role in the assembly of succinate dehydrogenase (SDH), an enzyme complex (also referred to as respiratory complex II) that is a component of both the tricarboxylic acid (TCA) cycle and the mitochondrial electron transport chain, and which couples the oxidation of succinate to fumarate with the reduction of ubiquinone (coenzyme Q) to ubiquinol. Required for flavinylation (covalent attachment of FAD) of the flavoprotein subunit of the SDH catalytic dimer. The sequence is that of Succinate dehydrogenase assembly factor 2, mitochondrial from Schizosaccharomyces pombe (strain 972 / ATCC 24843) (Fission yeast).